Consider the following 61-residue polypeptide: Large ribosomal subunit protein eL29 (61 aa).

The span at 1–26 (MAKSKNHTNHNQNKKAHRNGIKRPQK) shows a compositional bias: basic residues. The disordered stretch occupies residues 1-32 (MAKSKNHTNHNQNKKAHRNGIKRPQKHRYDSL).

The protein belongs to the eukaryotic ribosomal protein eL29 family. In terms of assembly, component of the large ribosomal subunit (LSU). Mature yeast ribosomes consist of a small (40S) and a large (60S) subunit. The 40S small subunit contains 1 molecule of ribosomal RNA (18S rRNA) and at least 33 different proteins. The large 60S subunit contains 3 rRNA molecules (25S, 5.8S and 5S rRNA) and at least 46 different proteins.

Its subcellular location is the cytoplasm. The protein localises to the nucleus. It localises to the nucleolus. Its function is as follows. Component of the ribosome, a large ribonucleoprotein complex responsible for the synthesis of proteins in the cell. The small ribosomal subunit (SSU) binds messenger RNAs (mRNAs) and translates the encoded message by selecting cognate aminoacyl-transfer RNA (tRNA) molecules. The large subunit (LSU) contains the ribosomal catalytic site termed the peptidyl transferase center (PTC), which catalyzes the formation of peptide bonds, thereby polymerizing the amino acids delivered by tRNAs into a polypeptide chain. The nascent polypeptides leave the ribosome through a tunnel in the LSU and interact with protein factors that function in enzymatic processing, targeting, and the membrane insertion of nascent chains at the exit of the ribosomal tunnel. The sequence is that of Large ribosomal subunit protein eL29 (rpl29) from Schizosaccharomyces pombe (strain 972 / ATCC 24843) (Fission yeast).